Reading from the N-terminus, the 980-residue chain is Putative leucine-rich repeat receptor-like serine/threonine-protein kinase At2g24130 (980 aa).

A signal peptide spans 1-20 (MDYCSLLVVSFLITVMTVLA). The Extracellular segment spans residues 21-593 (SKENDHELIK…ACKKKHKYPS (573 aa)). N-linked (GlcNAc...) asparagine glycosylation is found at Asn-55 and Asn-88. LRR repeat units lie at residues 65–89 (STQVIELDISGRDLGGEISPSIANL), 90–113 (TGLTVLDLSRNFFVGKIPPEIGSL), 115–138 (ETLKQLSLSENLLHGNIPQELGLL), 139–162 (NRLVYLDLGSNRLNGSIPVQLFCN), 165–189 (SSSLQYIDLSNNSLTGEIPLNYHCH), 191–214 (KELRFLLLWSNKLTGTVPSSLSNS), 215–238 (TNLKWMDLESNMLSGELPSQVISK), and 240–263 (PQLQFLYLSYNHFVSHNNNTNLEP). N-linked (GlcNAc...) asparagine glycans are attached at residues Asn-152, Asn-162, Asn-175, and Asn-213. Asn-257 and Asn-270 each carry an N-linked (GlcNAc...) asparagine glycan. LRR repeat units lie at residues 271–295 (SSDLQELELAGNSLGGEITSSVRHL), 296–320 (SVNLVQIHLDQNRIHGSIPPEISNL), 322–344 (NLTLLNLSSNLLSGPIPRELCKL), 345–370 (SKLERVYLSNNHLTGEIPMELGDIPR), 372–391 (GLLDVSRNNLSGSIPDSFGN), 392–416 (LSQLRRLLLYGNHLSGTVPQSLGKC), 417–440 (INLEILDLSHNNLTGTIPVEVVSN), 442–463 (RNLKLYLNLSSNHLSGPIPLEL), 464–490 (SKMDMVLSVDLSSNELSGKIPPQLGSC), 491–514 (IALEHLNLSRNGFSSTLPSSLGQL), 515–537 (PYLKELDVSFNRLTGAIPPSFQQ), and 539–563 (STLKHLNFSFNLLSGNVSDKGSFSK). 2 N-linked (GlcNAc...) asparagine glycosylation sites follow: Asn-322 and Asn-327. N-linked (GlcNAc...) asparagine glycosylation is found at Asn-380 and Asn-391. Asn-428 and Asn-449 each carry an N-linked (GlcNAc...) asparagine glycan. A glycan (N-linked (GlcNAc...) asparagine) is linked at Asn-497. Residues Asn-545 and Asn-554 are each glycosylated (N-linked (GlcNAc...) asparagine). The helical transmembrane segment at 594–614 (VLLPVLLSLIATPVLCVFGYP) threads the bilayer. At 615-980 (LVQRSRFGKN…SQETQGEASS (366 aa)) the chain is on the cytoplasmic side. Position 658 is a phosphothreonine (Thr-658). Residues 661-960 (FNASSLIGSG…HEMGRLKEYL (300 aa)) form the Protein kinase domain. ATP is bound by residues 667–675 (IGSGRFGHV) and Lys-689. At Tyr-775 the chain carries Phosphotyrosine. Asp-788 (proton acceptor) is an active-site residue. A Phosphotyrosine modification is found at Tyr-841.

This sequence belongs to the protein kinase superfamily. Ser/Thr protein kinase family.

The protein resides in the cell membrane. The catalysed reaction is L-seryl-[protein] + ATP = O-phospho-L-seryl-[protein] + ADP + H(+). It catalyses the reaction L-threonyl-[protein] + ATP = O-phospho-L-threonyl-[protein] + ADP + H(+). The sequence is that of Putative leucine-rich repeat receptor-like serine/threonine-protein kinase At2g24130 from Arabidopsis thaliana (Mouse-ear cress).